A 240-amino-acid polypeptide reads, in one-letter code: MADS-box protein SVP (240 aa).

Residues 3 to 57 enclose the MADS-box domain; that stretch reads REKIQIRKIDNATARQVTFSKRRRGLFKKAEELSVLCDADVALIIFSSTGKLFEF. The K-box domain maps to 87 to 180; the sequence is QLVENSDHAR…GTQLTEENER (94 aa). Residues 202 to 240 are disordered; that stretch reads VYEEGQSSESITNAGNSTGAPVDSESSDTSLRLGLPYGG. Positions 206–220 are enriched in polar residues; it reads GQSSESITNAGNSTG.

Forms a heterodimer with AP1 and SVP. Interacts with the SEU-LUG corepressor complex when complexed to AP1. Interacts with AGL15. Interacts with AGL16. Detected in roots and leaves. Expressed at very low levels in flowers and siliques. Present in floral meristems.

It localises to the nucleus. Functionally, transcription repressor that inhibit floral transition in the autonomous flowering pathway, independent of photoperiod and temperature. Acts in a dosage-dependent manner. Together with AGL24 and AP1, controls the identity of the floral meristem and regulates expression of class B, C and E genes. Promotes EFM expression to suppress flowering. In Arabidopsis thaliana (Mouse-ear cress), this protein is MADS-box protein SVP.